A 212-amino-acid chain; its full sequence is Ras-related protein Rab-15 (212 aa).

GTP-binding residues include Ser-17, Gly-18, Val-19, Gly-20, Lys-21, Thr-22, Cys-23, Ser-35, Ser-39, and Thr-40. A Mg(2+)-binding site is contributed by Thr-22. 2 consecutive short sequence motifs (switch) follow at residues 31-45 (NEFH…GVDF) and 63-80 (DTAG…YYRR). Mg(2+) is bound by residues Thr-40 and Asp-63. GTP contacts are provided by Gly-66, Asn-121, Lys-122, Asp-124, Ser-151, and Ala-152. The disordered stretch occupies residues 192 to 212 (ELEEDEGKPEGPANSSKTCWC). 2 S-geranylgeranyl cysteine lipidation sites follow: Cys-210 and Cys-212. Position 212 is a cysteine methyl ester (Cys-212).

Belongs to the small GTPase superfamily. Rab family. The GTP bound form of RAB15 interacts with REP15. Interacts (GTP-bound form) with MICAL1, MICAL3, MICALCL, EHBP1 and EHBP1L1. Mg(2+) serves as cofactor.

It is found in the cell membrane. The enzyme catalyses GTP + H2O = GDP + phosphate + H(+). With respect to regulation, regulated by guanine nucleotide exchange factors (GEFs) which promote the exchange of bound GDP for free GTP. Regulated by GTPase activating proteins (GAPs) which increase the GTP hydrolysis activity. Inhibited by GDP dissociation inhibitors (GDIs). In terms of biological role, the small GTPases Rab are key regulators of intracellular membrane trafficking, from the formation of transport vesicles to their fusion with membranes. Rabs cycle between an inactive GDP-bound form and an active GTP-bound form that is able to recruit to membranes different sets of downstream effectors directly responsible for vesicle formation, movement, tethering and fusion. RAB15 may act in concert with RAB3A in regulating aspects of synaptic vesicle membrane flow within the nerve terminal. This is Ras-related protein Rab-15 from Mus musculus (Mouse).